We begin with the raw amino-acid sequence, 348 residues long: Anthranilate phosphoribosyltransferase (348 aa).

Residues Gly80, 83-84 (GD), Thr88, 90-93 (NVST), 108-116 (KHGNRSVSS), and Ser120 contribute to the 5-phospho-alpha-D-ribose 1-diphosphate site. Gly80 contributes to the anthranilate binding site. Ser92 is a Mg(2+) binding site. Asn111 is an anthranilate binding site. Arg166 is an anthranilate binding site. The Mg(2+) site is built by Asp224 and Glu225.

Belongs to the anthranilate phosphoribosyltransferase family. As to quaternary structure, homodimer. Mg(2+) is required as a cofactor.

It carries out the reaction N-(5-phospho-beta-D-ribosyl)anthranilate + diphosphate = 5-phospho-alpha-D-ribose 1-diphosphate + anthranilate. The protein operates within amino-acid biosynthesis; L-tryptophan biosynthesis; L-tryptophan from chorismate: step 2/5. Catalyzes the transfer of the phosphoribosyl group of 5-phosphorylribose-1-pyrophosphate (PRPP) to anthranilate to yield N-(5'-phosphoribosyl)-anthranilate (PRA). The protein is Anthranilate phosphoribosyltransferase of Sorangium cellulosum (strain So ce56) (Polyangium cellulosum (strain So ce56)).